The sequence spans 192 residues: Group XIIA secretory phospholipase A2 (192 aa).

Positions 1–25 are cleaved as a signal peptide; sequence MVTPRPAPARSPALLLLLLLATARG. The Ca(2+) site is built by glycine 91, proline 93, and phenylalanine 95. Histidine 113 is a catalytic residue. Aspartate 114 contacts Ca(2+). Aspartate 128 is an active-site residue.

The protein belongs to the phospholipase A2 family. Requires Ca(2+) as cofactor.

Its subcellular location is the secreted. The protein localises to the cytoplasm. The catalysed reaction is a 1,2-diacyl-sn-glycero-3-phosphocholine + H2O = a 1-acyl-sn-glycero-3-phosphocholine + a fatty acid + H(+). In terms of biological role, PA2 catalyzes the calcium-dependent hydrolysis of the 2-acyl groups in 3-sn-phosphoglycerides. Does not exhibit detectable activity toward sn-2-arachidonoyl- or linoleoyl-phosphatidylcholine or -phosphatidylethanolamine. This Mus musculus (Mouse) protein is Group XIIA secretory phospholipase A2 (Pla2g12a).